Reading from the N-terminus, the 218-residue chain is Small ribosomal subunit protein uS5 (218 aa).

Positions 1–45 (MPGRQRRDGGNGPAGQNSNGPEGRDNRRGGGDRRGGGDRRDNAAE) are disordered. A compositionally biased stretch (basic and acidic residues) spans 22–45 (EGRDNRRGGGDRRGGGDRRDNAAE). The S5 DRBM domain maps to 48-111 (QLERVVAINR…EEARKGFFRV (64 aa)).

The protein belongs to the universal ribosomal protein uS5 family. In terms of assembly, part of the 30S ribosomal subunit. Contacts proteins S4 and S8.

With S4 and S12 plays an important role in translational accuracy. Functionally, located at the back of the 30S subunit body where it stabilizes the conformation of the head with respect to the body. This is Small ribosomal subunit protein uS5 from Nocardia farcinica (strain IFM 10152).